We begin with the raw amino-acid sequence, 463 residues long: ATP synthase subunit beta (463 aa).

An ATP-binding site is contributed by 151 to 158 (GGAGVGKT).

This sequence belongs to the ATPase alpha/beta chains family. As to quaternary structure, F-type ATPases have 2 components, CF(1) - the catalytic core - and CF(0) - the membrane proton channel. CF(1) has five subunits: alpha(3), beta(3), gamma(1), delta(1), epsilon(1). CF(0) has three main subunits: a(1), b(2) and c(9-12). The alpha and beta chains form an alternating ring which encloses part of the gamma chain. CF(1) is attached to CF(0) by a central stalk formed by the gamma and epsilon chains, while a peripheral stalk is formed by the delta and b chains.

It is found in the cell membrane. The catalysed reaction is ATP + H2O + 4 H(+)(in) = ADP + phosphate + 5 H(+)(out). Its function is as follows. Produces ATP from ADP in the presence of a proton gradient across the membrane. The catalytic sites are hosted primarily by the beta subunits. The chain is ATP synthase subunit beta from Clostridium botulinum (strain ATCC 19397 / Type A).